The chain runs to 69 residues: Small ribosomal subunit protein bS21 (69 aa).

A disordered region spans residues 49-69 (IESAKRKAEKKKRLFSKKDKA).

This sequence belongs to the bacterial ribosomal protein bS21 family.

In Leptospira borgpetersenii serovar Hardjo-bovis (strain JB197), this protein is Small ribosomal subunit protein bS21.